The chain runs to 189 residues: Elongation factor P (189 aa).

Lys-34 is modified (N6-(3,6-diaminohexanoyl)-5-hydroxylysine).

This sequence belongs to the elongation factor P family. In terms of processing, may be beta-lysylated on the epsilon-amino group of Lys-34 by the combined action of EpmA and EpmB, and then hydroxylated on the C5 position of the same residue by EpmC (if this protein is present). Lysylation is critical for the stimulatory effect of EF-P on peptide-bond formation. The lysylation moiety may extend toward the peptidyltransferase center and stabilize the terminal 3-CCA end of the tRNA. Hydroxylation of the C5 position on Lys-34 may allow additional potential stabilizing hydrogen-bond interactions with the P-tRNA.

The protein resides in the cytoplasm. It participates in protein biosynthesis; polypeptide chain elongation. In terms of biological role, involved in peptide bond synthesis. Alleviates ribosome stalling that occurs when 3 or more consecutive Pro residues or the sequence PPG is present in a protein, possibly by augmenting the peptidyl transferase activity of the ribosome. Modification of Lys-34 is required for alleviation. The polypeptide is Elongation factor P (Legionella pneumophila (strain Lens)).